The primary structure comprises 211 residues: Guanylate kinase (211 aa).

In terms of domain architecture, Guanylate kinase-like spans 7-185 (GLLIVVTGPS…AVAELRAIIM (179 aa)). An ATP-binding site is contributed by 14–21 (GPSAVGKG).

The protein belongs to the guanylate kinase family.

It is found in the cytoplasm. It carries out the reaction GMP + ATP = GDP + ADP. Functionally, essential for recycling GMP and indirectly, cGMP. The sequence is that of Guanylate kinase from Symbiobacterium thermophilum (strain DSM 24528 / JCM 14929 / IAM 14863 / T).